Consider the following 1118-residue polypeptide: Phytochrome 1 (1118 aa).

A compositionally biased stretch (low complexity) spans 1 to 10; that stretch reads MSSTRHSYSS. Positions 1-23 are disordered; the sequence is MSSTRHSYSSGGSGKSKHGRRIA. Residues 212–391 enclose the GAF domain; sequence DIGLLCDSVV…VFSLQLNMEV (180 aa). Residue Cys-317 coordinates phytochromobilin. 2 consecutive PAS domains span residues 606–677 and 740–811; these read VASE…LEGE and DYKA…TKLM. The 224-residue stretch at 887–1110 folds into the Histidine kinase domain; the sequence is YVKEELKKPL…LVTIQFPLAH (224 aa).

It belongs to the phytochrome family. In terms of assembly, homodimer. Post-translationally, contains one covalently linked phytochromobilin chromophore.

Regulatory photoreceptor which exists in two forms that are reversibly interconvertible by light: the Pr form that absorbs maximally in the red region of the spectrum and the Pfr form that absorbs maximally in the far-red region. Photoconversion of Pr to Pfr induces an array of morphogenic responses, whereas reconversion of Pfr to Pr cancels the induction of those responses. Pfr controls the expression of a number of nuclear genes including those encoding the small subunit of ribulose-bisphosphate carboxylase, chlorophyll A/B binding protein, protochlorophyllide reductase, rRNA, etc. It also controls the expression of its own gene(s) in a negative feedback fashion. This Adiantum capillus-veneris (Maidenhair fern) protein is Phytochrome 1 (PHY1).